Reading from the N-terminus, the 464-residue chain is Argininosuccinate lyase (464 aa).

Belongs to the lyase 1 family. Argininosuccinate lyase subfamily.

The protein localises to the cytoplasm. The enzyme catalyses 2-(N(omega)-L-arginino)succinate = fumarate + L-arginine. It participates in amino-acid biosynthesis; L-arginine biosynthesis; L-arginine from L-ornithine and carbamoyl phosphate: step 3/3. In Pseudomonas entomophila (strain L48), this protein is Argininosuccinate lyase.